A 320-amino-acid polypeptide reads, in one-letter code: Endolytic peptidoglycan transglycosylase RlpA (320 aa).

This sequence belongs to the RlpA family.

Lytic transglycosylase with a strong preference for naked glycan strands that lack stem peptides. This is Endolytic peptidoglycan transglycosylase RlpA from Rickettsia prowazekii (strain Madrid E).